A 205-amino-acid polypeptide reads, in one-letter code: Protein phosphatase inhibitor 2 (205 aa).

The disordered stretch occupies residues 1–44; it reads MAASTASHRPIKGILKNKTSTTSSMVASAEQPRGNVDEELSKKS. Alanine 2 bears the N-acetylalanine mark. Required for binding PPP1CC stretches follow at residues 12-17 and 43-55; these read KGILKN and KSQK…ILAT. Residues 17-26 are compositionally biased toward polar residues; the sequence is NKTSTTSSMV. Positions 35–44 are enriched in basic and acidic residues; sequence NVDEELSKKS. The residue at position 44 (serine 44) is a Phosphoserine; by ATM. The residue at position 73 (threonine 73) is a Phosphothreonine; by GSK3. Serine 87 carries the post-translational modification Phosphoserine. Residues threonine 89 and threonine 92 each carry the phosphothreonine modification. A disordered region spans residues 111–142; that stretch reads EPKYRIQEQESSGEEDSDLSPEEREKKRQFEM. 4 positions are modified to phosphoserine: serine 121, serine 122, serine 127, and serine 130. The segment covering 121-130 has biased composition (acidic residues); the sequence is SSGEEDSDLS. Over residues 131 to 142 the composition is skewed to basic and acidic residues; that stretch reads PEEREKKRQFEM. The segment at 147–150 is required for binding PPP1CC catalytic center, displacing metal ions and inhibition of PPP1CC catalytic activity; it reads HYNE. The interval 163–205 is disordered; the sequence is KDLHDDDEDEEMLETADGESMNTEESNQGSTPSDQQQNKLRSS. Positions 167–179 are enriched in acidic residues; that stretch reads DDDEDEEMLETAD. The segment covering 182–205 has biased composition (polar residues); the sequence is SMNTEESNQGSTPSDQQQNKLRSS.

Belongs to the protein phosphatase inhibitor 2 family. In terms of assembly, heterodimer with PP1. Post-translationally, phosphorylation on Thr-73 by GSK3 activates PP1 by dissociating the PP1-PPP1R2 complex. Phosphorylation on Ser-44 by ATM activates PP1 by dissociating the PP1-PPP1R2 complex.

Its function is as follows. Inhibitor of protein-phosphatase 1. This Homo sapiens (Human) protein is Protein phosphatase inhibitor 2 (PPP1R2).